We begin with the raw amino-acid sequence, 144 residues long: Ribonuclease H (144 aa).

Residues 1–136 (MKIVTLFSDG…CDQMARNEAL (136 aa)) form the RNase H type-1 domain. Positions 9, 47, 69, and 128 each coordinate Mg(2+).

This sequence belongs to the RNase H family. Monomer. The cofactor is Mg(2+).

Its subcellular location is the cytoplasm. It carries out the reaction Endonucleolytic cleavage to 5'-phosphomonoester.. Its function is as follows. Endonuclease that specifically degrades the RNA of RNA-DNA hybrids. The protein is Ribonuclease H of Campylobacter concisus (strain 13826).